The sequence spans 227 residues: Abasic site processing protein YoaM (227 aa).

The active-site Nucleophile is the cysteine 2. Cysteine 2 carries the post-translational modification Thiazolidine linkage to a ring-opened DNA abasic site. The active site involves glutamate 106.

Belongs to the SOS response-associated peptidase family.

With respect to regulation, formation and reversal of DNA-protein cross-link depends on DNA context. Catalyzes formation of the thiazolidine linkage in presence of abasic sites in single-stranded DNA. Mediates the reversal of the thiazolidine cross-link in presence of double stranded DNA. Sensor of abasic sites in single-stranded DNA (ssDNA) required to preserve genome integrity by promoting error-free repair of abasic sites. Recognizes and binds abasic sites in ssDNA at replication forks and chemically modifies the lesion by forming a covalent cross-link with DNA: forms a stable thiazolidine linkage between a ring-opened abasic site and the alpha-amino and sulfhydryl substituents of its N-terminal catalytic cysteine residue. The DNA-protein cross-link is then reversed: able to catalyze the reversal of the thiazolidine cross-link and cycle between a cross-link and a non-cross-linked state depending on DNA context: mediates self-reversal of the thiazolidine cross-link in double stranded DNA. May act as a protease: mediates autocatalytic processing of its N-terminal methionine in order to expose the catalytic cysteine. This chain is Abasic site processing protein YoaM (yoaM), found in Bacillus subtilis (strain 168).